We begin with the raw amino-acid sequence, 243 residues long: Zinc import ATP-binding protein ZnuC (243 aa).

The ABC transporter domain maps to 4-219 (IAAHHLAVRR…PEYRALFGHG (216 aa)). Residue 36–43 (GPNGSGKS) coordinates ATP.

The protein belongs to the ABC transporter superfamily. Zinc importer (TC 3.A.1.15.5) family. In terms of assembly, the complex is composed of two ATP-binding proteins (ZnuC), two transmembrane proteins (ZnuB) and a solute-binding protein (ZnuA).

It is found in the cell inner membrane. It carries out the reaction Zn(2+)(out) + ATP(in) + H2O(in) = Zn(2+)(in) + ADP(in) + phosphate(in) + H(+)(in). Functionally, part of the ABC transporter complex ZnuABC involved in zinc import. Responsible for energy coupling to the transport system. The protein is Zinc import ATP-binding protein ZnuC of Cereibacter sphaeroides (strain ATCC 17023 / DSM 158 / JCM 6121 / CCUG 31486 / LMG 2827 / NBRC 12203 / NCIMB 8253 / ATH 2.4.1.) (Rhodobacter sphaeroides).